We begin with the raw amino-acid sequence, 122 residues long: Probable glycine cleavage system H protein (122 aa).

A Lipoyl-binding domain is found at 23–104 (IATVGITDYA…PYGNWLVKMK (82 aa)). Position 64 is an N6-lipoyllysine (Lys64).

It belongs to the GcvH family. As to quaternary structure, the glycine cleavage system is composed of four proteins: P, T, L and H. The cofactor is (R)-lipoate.

Functionally, the glycine cleavage system catalyzes the degradation of glycine. The H protein shuttles the methylamine group of glycine from the P protein to the T protein. In Thermoplasma volcanium (strain ATCC 51530 / DSM 4299 / JCM 9571 / NBRC 15438 / GSS1), this protein is Probable glycine cleavage system H protein.